Here is a 556-residue protein sequence, read N- to C-terminus: Glucose-6-phosphate isomerase (556 aa).

The active-site Proton donor is E360. Catalysis depends on residues H391 and K519.

Belongs to the GPI family.

The protein localises to the cytoplasm. It carries out the reaction alpha-D-glucose 6-phosphate = beta-D-fructose 6-phosphate. It participates in carbohydrate biosynthesis; gluconeogenesis. The protein operates within carbohydrate degradation; glycolysis; D-glyceraldehyde 3-phosphate and glycerone phosphate from D-glucose: step 2/4. In terms of biological role, catalyzes the reversible isomerization of glucose-6-phosphate to fructose-6-phosphate. The chain is Glucose-6-phosphate isomerase from Acinetobacter baumannii (strain AB0057).